Consider the following 1052-residue polypeptide: Kinesin-like protein KIF11 (1052 aa).

The Kinesin motor domain occupies 17 to 358; that stretch reads NIQVVVRCRP…LEYAHRAKNI (342 aa). Position 104 to 111 (104 to 111) interacts with ATP; it reads GQTGTGKT. N6-acetyllysine is present on Lys-145. Residues 364–478 are a coiled coil; that stretch reads VNQKLTKKAL…ETKLQLVKEE (115 aa). Thr-457 bears the Phosphothreonine mark. Lys-476 participates in a covalent cross-link: Glycyl lysine isopeptide (Lys-Gly) (interchain with G-Cter in SUMO2). Thr-925 bears the Phosphothreonine mark. 2 disordered regions span residues 950–1026 and 1033–1052; these read LQKK…LNPV and EASD…SINL. The stretch at 963–988 forms a coiled coil; that stretch reads EASKETSQDMDEEREALEQCTEELVS. Residues 1016-1026 are compositionally biased toward basic and acidic residues; that stretch reads KDKENRGLNPV.

The protein belongs to the TRAFAC class myosin-kinesin ATPase superfamily. Kinesin family. BimC subfamily. In terms of assembly, interacts with the thyroid hormone receptor in the presence of thyroid hormone. Component of a large chromatin remodeling complex, at least composed of MYSM1, PCAF, RBM10 and KIF11/TRIP5. Interacts with RARRES1 and AGBL2. Phosphorylated exclusively on serine during S phase, but on both serine and Thr-925 during mitosis, so controlling the association of KIF11 with the spindle apparatus (probably during early prophase).

It localises to the cytoplasm. Its subcellular location is the cytoskeleton. It is found in the spindle pole. In terms of biological role, motor protein required for establishing a bipolar spindle during mitosis. Required in non-mitotic cells for transport of secretory proteins from the Golgi complex to the cell surface. The chain is Kinesin-like protein KIF11 (Kif11) from Mus musculus (Mouse).